The primary structure comprises 66 residues: Large ribosomal subunit protein bL35 (66 aa).

This sequence belongs to the bacterial ribosomal protein bL35 family.

In Afipia carboxidovorans (strain ATCC 49405 / DSM 1227 / KCTC 32145 / OM5) (Oligotropha carboxidovorans), this protein is Large ribosomal subunit protein bL35.